Reading from the N-terminus, the 169-residue chain is Histone H1.9 (169 aa).

Polar residues-rich tracts occupy residues 1-10 (MSLVSPSPDS) and 19-36 (DAST…IGPN). The disordered stretch occupies residues 1–36 (MSLVSPSPDSNAVMAGDQDASTSQVPSQSESKIGPN). The region spanning 43–116 (RKPTMSKVIL…GASGSFRLGK (74 aa)) is the H15 domain. Phosphoserine occurs at positions 62 and 65. Basic residues predominate over residues 118–142 (QAFKSKCKAKRRQRRQKPGQRRTGS). Residues 118-154 (QAFKSKCKAKRRQRRQKPGQRRTGSRRSLLGSKKSNN) are disordered.

It belongs to the histone H1/H5 family.

Its subcellular location is the nucleus. The protein resides in the chromosome. Its function is as follows. DNA-binding protein that may be implicated in chromatin remodeling and/or transcriptional regulation during spermiogenesis, the process of spermatid maturation into spermatozoa. This is Histone H1.9 from Rattus norvegicus (Rat).